A 706-amino-acid polypeptide reads, in one-letter code: B-cell lymphoma 6 protein (706 aa).

A BTB domain is found at 32–99 (TDVVIVVSRE…MYTSRLNLRE (68 aa)). The interval 317–349 (EPPNAPLNRKGLVSPQSPQKSDCQPNSPTESCS) is disordered. A compositionally biased stretch (polar residues) spans 330–349 (SPQSPQKSDCQPNSPTESCS). Residues Ser-333 and Ser-343 each carry the phosphoserine; by MAPK1 modification. Position 361 is a phosphoserine (Ser-361). The required for interaction with NuRD complex and for transcriptional repressor activity stretch occupies residues 376-379 (KKYK). An N6-acetyllysine modification is found at Lys-379. A Phosphoserine modification is found at Ser-404. A disordered region spans residues 407-467 (AYTAPPACQP…PRSSSESHSP (61 aa)). Positions 424–456 (DLQSPTKLSASGEDSTIPQASRLNNIVNRSMTG) are enriched in polar residues. Low complexity predominate over residues 457–466 (SPRSSSESHS). C2H2-type zinc fingers lie at residues 518–541 (FFCNECDCRFSEEASLKRHTLQTH), 546–568 (YKCDRCQASFRYKGNLASHKTVH), 574–596 (YRCNICGAQFNRPANLKTHTRIH), 602–624 (YKCETCGARFVQVAHLRAHVLIH), 630–652 (YPCEICGTRFRHLQTLKSHLRIH), and 658–681 (YHCEKCNLHFRHKSQLRLHLRQKH).

In terms of assembly, homodimer. Interacts (via BTB domain) with the corepressors BCOR, NCOR1 and SMRT/NCOR2; the interactions are direct. Forms preferably ternary complexes with BCOR and SMRT/NCOR2 on target gene promoters but, on enhancer elements, interacts with SMRT/NCOR2 and HDAC3 to repress proximal gene expression. Interacts with histone deacetylases HDAC2, HDAC5 and HDAC9 (via the catalytic domain). Interacts with ZBTB7 and BCL6B. Interacts with SCF(FBXO11) complex; the interaction is independent of phosphorylation and promotes ubiquitination. Interacts (when phosphorylated) with PIN1; the interaction is required for BCL6 degradation upon genotoxic stress. Interacts with ZBTB17; inhibits ZBTB17 transcriptional activity. Interacts with CTBP1, autoinhibits its transcriptional expression. Interacts with NOTCH1 NCID and SIRT1; leads to a epigenetic repression of selective NOTCH1-target genes. Interacts (nor via BTB domain neither acetylated) with the NuRD complex components CHD4, HDAC1, MBD3 and MTA3; the interaction with MTA3 inhibits BCL6 acetylation and is required for BCL6 transpriptional repression. Phosphorylated by MAPK1 in response to antigen receptor activation at Ser-333 and Ser-343. Phosphorylated by ATM in response to genotoxic stress. Phosphorylation induces its degradation by ubiquitin/proteasome pathway. Post-translationally, polyubiquitinated. Polyubiquitinated by SCF(FBXO11), leading to its degradation by the proteasome. Ubiquitinated by the SCF(FBXL17) complex, leading to its degradation by the proteasome: ubiquitination by the SCF(FBXL17) complex takes place when aberrant BTB domain dimers are formed. In terms of processing, acetylated at Lys-379 by EP300 which inhibits the interaction with NuRD complex and the transcriptional repressor function. Deacetylated by HDAC- and SIR2-dependent pathways. Expressed in germinal center T- and B-cells and in primary immature dendritic cells.

It localises to the nucleus. Its function is as follows. Transcriptional repressor mainly required for germinal center (GC) formation and antibody affinity maturation which has different mechanisms of action specific to the lineage and biological functions. Forms complexes with different corepressors and histone deacetylases to repress the transcriptional expression of different subsets of target genes. Represses its target genes by binding directly to the DNA sequence 5'-TTCCTAGAA-3' (BCL6-binding site) or indirectly by repressing the transcriptional activity of transcription factors. In GC B-cells, represses genes that function in differentiation, inflammation, apoptosis and cell cycle control, also autoregulates its transcriptional expression and up-regulates, indirectly, the expression of some genes important for GC reactions, such as AICDA, through the repression of microRNAs expression, like miR155. An important function is to allow GC B-cells to proliferate very rapidly in response to T-cell dependent antigens and tolerate the physiological DNA breaks required for immunglobulin class switch recombination and somatic hypermutation without inducing a p53/TP53-dependent apoptotic response. In follicular helper CD4(+) T-cells (T(FH) cells), promotes the expression of T(FH)-related genes but inhibits the differentiation of T(H)1, T(H)2 and T(H)17 cells. Also required for the establishment and maintenance of immunological memory for both T- and B-cells. Suppresses macrophage proliferation through competition with STAT5 for STAT-binding motifs binding on certain target genes, such as CCL2 and CCND2. In response to genotoxic stress, controls cell cycle arrest in GC B-cells in both p53/TP53-dependedent and -independent manners. Besides, also controls neurogenesis through the alteration of the composition of NOTCH-dependent transcriptional complexes at selective NOTCH targets, such as HES5, including the recruitment of the deacetylase SIRT1 and resulting in an epigenetic silencing leading to neuronal differentiation. In Homo sapiens (Human), this protein is B-cell lymphoma 6 protein (BCL6).